The sequence spans 158 residues: Anaerobic ribonucleoside-triphosphate reductase-activating protein (158 aa).

Positions 26, 30, and 33 each coordinate [4Fe-4S] cluster. Residues 32 to 34 (GCY) and Gly74 contribute to the S-adenosyl-L-methionine site.

Belongs to the organic radical-activating enzymes family. In terms of assembly, forms a tetramer composed of two NrdD and two NrdG subunits. It depends on [4Fe-4S] cluster as a cofactor.

The protein resides in the cytoplasm. The catalysed reaction is glycyl-[protein] + reduced [flavodoxin] + S-adenosyl-L-methionine = glycin-2-yl radical-[protein] + semiquinone [flavodoxin] + 5'-deoxyadenosine + L-methionine + H(+). Activation of anaerobic ribonucleoside-triphosphate reductase under anaerobic conditions by generation of an organic free radical, using S-adenosylmethionine and reduced flavodoxin as cosubstrates to produce 5'-deoxy-adenosine. This chain is Anaerobic ribonucleoside-triphosphate reductase-activating protein (nrdG), found in Pasteurella multocida (strain Pm70).